We begin with the raw amino-acid sequence, 137 residues long: Probable 4-amino-4-deoxy-L-arabinose-phosphoundecaprenol flippase subunit ArnF (137 aa).

3 consecutive transmembrane segments (helical) span residues 43–63 (AIAVICASITAYALSMLFWLL), 74–94 (YSLLSISYALVYTLAATLPFF), and 98–118 (FTVSKTVGVTLIVAGVLTINL).

The protein belongs to the ArnF family. In terms of assembly, heterodimer of ArnE and ArnF.

The protein resides in the cell inner membrane. Its pathway is bacterial outer membrane biogenesis; lipopolysaccharide biosynthesis. Its function is as follows. Translocates 4-amino-4-deoxy-L-arabinose-phosphoundecaprenol (alpha-L-Ara4N-phosphoundecaprenol) from the cytoplasmic to the periplasmic side of the inner membrane. This Pseudomonas savastanoi pv. phaseolicola (strain 1448A / Race 6) (Pseudomonas syringae pv. phaseolicola (strain 1448A / Race 6)) protein is Probable 4-amino-4-deoxy-L-arabinose-phosphoundecaprenol flippase subunit ArnF.